Reading from the N-terminus, the 574-residue chain is FAD-linked oxidoreductase sor8 (574 aa).

A signal peptide spans 1-27; sequence MYAPPFVRAFGIAVLAVLPSFSSPATA. Asn-58, Asn-112, Asn-136, Asn-266, Asn-312, Asn-363, and Asn-384 each carry an N-linked (GlcNAc...) asparagine glycan. The 180-residue stretch at 126–305 folds into the FAD-binding PCMH-type domain; the sequence is VIGTYVQYAV…YSMTVKAHAN (180 aa).

The protein belongs to the oxygen-dependent FAD-linked oxidoreductase family. FAD is required as a cofactor.

It functions in the pathway secondary metabolite biosynthesis. FAD-linked oxidoreductase; part of the SOR gene cluster that mediates the biosynthesis of sorbicillinoids, a diverse group of yellow secondary metabolites that restrict growth of competing pathogenic fungi but not of bacteria. Sorbicillinoids biosynthesis requires the action of two PKSs. The SOR cluster is required for the production of trichodimerol and dihydrotrichotetronin, with sor2 being sufficient for production of trichodimerol, but not dihydrotrichotetronin in the light. Sor1 iteratively combines three acetyl units and the growing chain is modified by the ketoacyl reductase subunit, and optional by the enoyl reductase subunit in the second cycle. The polyketide is then handed over to the PKS sor2, which adds three more acetyl units, and two methyl groups. Sor2 releases an aldehyde, which undergoes spontaneous cyclization resulting in the formation of sorbicillin or 2',3'-dihydrosorbicillin. The monooxygenase sor5 oxidizes sorbicillin and 2',3'-dihydrosorbicillin to 2',3'-dihydrosorbicillinol and sorbicillinol, respectively. The oxidoreductase sor8 further converts sorbicillinol into oxosorbicillinol. Sorbicillinol is the building block for the other sorbicillinoids such as disorbicillinol, bisvertinolon, dihydrobisvertinolone, and dihydrotrichotetronine. This is FAD-linked oxidoreductase sor8 from Hypocrea jecorina (strain QM6a) (Trichoderma reesei).